The chain runs to 801 residues: Phenylalanine--tRNA ligase beta subunit (801 aa).

Positions 39 to 153 (AEGLSKLVVG…EGAIPGDSIF (115 aa)) constitute a tRNA-binding domain. The B5 domain occupies 406–481 (TEPVEVSTTL…RIYGYEKLPT (76 aa)). Positions 459, 465, 468, and 469 each coordinate Mg(2+). Positions 708–801 (TKYPSVSRDI…LVEKVNAEIR (94 aa)) constitute an FDX-ACB domain.

Belongs to the phenylalanyl-tRNA synthetase beta subunit family. Type 1 subfamily. Tetramer of two alpha and two beta subunits. Requires Mg(2+) as cofactor.

The protein localises to the cytoplasm. The catalysed reaction is tRNA(Phe) + L-phenylalanine + ATP = L-phenylalanyl-tRNA(Phe) + AMP + diphosphate + H(+). The sequence is that of Phenylalanine--tRNA ligase beta subunit from Streptococcus agalactiae serotype Ia (strain ATCC 27591 / A909 / CDC SS700).